The chain runs to 636 residues: DNA-directed RNA polymerase III subunit RPC3 (636 aa).

Positions 366–385 (SMQRRSQERSTHQGQSHKRL) are disordered. A leucine-zipper region spans residues 563–584 (LAWNIANSIHKTEILKEENFTL).

It belongs to the RNA polymerase beta chain family. As to quaternary structure, component of the RNA polymerase III (Pol III) complex consisting of 17 subunits.

It is found in the nucleus. In terms of biological role, DNA-dependent RNA polymerase catalyzes the transcription of DNA into RNA using the four ribonucleoside triphosphates as substrates. Specific core component of RNA polymerase III which synthesizes small RNAs, such as 5S rRNA and tRNAs. This is DNA-directed RNA polymerase III subunit RPC3 (RPC82) from Eremothecium gossypii (strain ATCC 10895 / CBS 109.51 / FGSC 9923 / NRRL Y-1056) (Yeast).